A 170-amino-acid polypeptide reads, in one-letter code: Inducible metalloproteinase inhibitor protein (170 aa).

The first 19 residues, 1 to 19, serve as a signal peptide directing secretion; sequence MKCLLYLCLWCYCVLVSSS. N-linked (GlcNAc...) asparagine glycosylation is found at asparagine 48 and asparagine 149.

Cleaved. In terms of processing, five disulfide bonds are present. When artificially cleaved by thermolysin between Asn-56 and Ile-57, the two obtained chains (called heavy and light chains) remain linked. Post-translationally, the N-terminus is blocked.

Its function is as follows. Inhibits thermolysin, bacillolysin and pseudolysin, B.polymyxa metalloprotease and human MMP1 and MMP3. No activity on trypsin or cysteine protease papain. The sequence is that of Inducible metalloproteinase inhibitor protein (IMPI) from Galleria mellonella (Greater wax moth).